Reading from the N-terminus, the 287-residue chain is Bifunctional protein FolD (287 aa).

NADP(+)-binding positions include 171–173 (GHS) and I237.

The protein belongs to the tetrahydrofolate dehydrogenase/cyclohydrolase family. As to quaternary structure, homodimer.

The enzyme catalyses (6R)-5,10-methylene-5,6,7,8-tetrahydrofolate + NADP(+) = (6R)-5,10-methenyltetrahydrofolate + NADPH. It carries out the reaction (6R)-5,10-methenyltetrahydrofolate + H2O = (6R)-10-formyltetrahydrofolate + H(+). It functions in the pathway one-carbon metabolism; tetrahydrofolate interconversion. Its function is as follows. Catalyzes the oxidation of 5,10-methylenetetrahydrofolate to 5,10-methenyltetrahydrofolate and then the hydrolysis of 5,10-methenyltetrahydrofolate to 10-formyltetrahydrofolate. The sequence is that of Bifunctional protein FolD from Methanosarcina barkeri (strain Fusaro / DSM 804).